A 384-amino-acid polypeptide reads, in one-letter code: Chaperone protein DnaJ (384 aa).

The J domain maps to 5-70 (DYYEVLGVSK…DKKAAYDRYG (66 aa)). Residues 16 to 47 (ASSDDIKKGYRRKAKELHPDRNKDDPNAEAQF) are disordered. The span at 31–47 (ELHPDRNKDDPNAEAQF) shows a compositional bias: basic and acidic residues. Residues 143 to 221 (GLQKTINVPT…CQGAGRVEKD (79 aa)) form a CR-type zinc finger. Zn(2+) contacts are provided by C156, C159, C173, C176, C195, C198, C209, and C212. CXXCXGXG motif repeat units follow at residues 156–163 (CKTCNGSG), 173–180 (CPTCSGMG), 195–202 (CPTCSGLG), and 209–216 (CKSCQGAG).

This sequence belongs to the DnaJ family. As to quaternary structure, homodimer. Zn(2+) serves as cofactor.

Its subcellular location is the cytoplasm. In terms of biological role, participates actively in the response to hyperosmotic and heat shock by preventing the aggregation of stress-denatured proteins and by disaggregating proteins, also in an autonomous, DnaK-independent fashion. Unfolded proteins bind initially to DnaJ; upon interaction with the DnaJ-bound protein, DnaK hydrolyzes its bound ATP, resulting in the formation of a stable complex. GrpE releases ADP from DnaK; ATP binding to DnaK triggers the release of the substrate protein, thus completing the reaction cycle. Several rounds of ATP-dependent interactions between DnaJ, DnaK and GrpE are required for fully efficient folding. Also involved, together with DnaK and GrpE, in the DNA replication of plasmids through activation of initiation proteins. The chain is Chaperone protein DnaJ from Roseobacter denitrificans (strain ATCC 33942 / OCh 114) (Erythrobacter sp. (strain OCh 114)).